The primary structure comprises 206 residues: Probable GTP-binding protein EngB (206 aa).

Positions 23-202 constitute an EngB-type G domain; sequence HTAEVAFVGR…WGALLDTFGK (180 aa). GTP is bound by residues 31–38, 58–62, 83–86, 150–153, and 181–183; these read GRSNVGKS, GRTRT, DLPG, TKVD, and FSS. The Mg(2+) site is built by S38 and T60.

Belongs to the TRAFAC class TrmE-Era-EngA-EngB-Septin-like GTPase superfamily. EngB GTPase family. It depends on Mg(2+) as a cofactor.

Necessary for normal cell division and for the maintenance of normal septation. The protein is Probable GTP-binding protein EngB of Myxococcus xanthus (strain DK1622).